A 158-amino-acid polypeptide reads, in one-letter code: 2-C-methyl-D-erythritol 2,4-cyclodiphosphate synthase (158 aa).

A divalent metal cation contacts are provided by Asp9 and His11. Residues 9 to 11 and 35 to 36 contribute to the 4-CDP-2-C-methyl-D-erythritol 2-phosphate site; these read DVH and HS. A divalent metal cation is bound at residue His43. Residues 57–59, 62–66, 101–107, 133–136, Phe140, and Arg143 contribute to the 4-CDP-2-C-methyl-D-erythritol 2-phosphate site; these read DIG, FPDTD, AQKPKML, and TTTE.

This sequence belongs to the IspF family. Homotrimer. The cofactor is a divalent metal cation.

It catalyses the reaction 4-CDP-2-C-methyl-D-erythritol 2-phosphate = 2-C-methyl-D-erythritol 2,4-cyclic diphosphate + CMP. The protein operates within isoprenoid biosynthesis; isopentenyl diphosphate biosynthesis via DXP pathway; isopentenyl diphosphate from 1-deoxy-D-xylulose 5-phosphate: step 4/6. In terms of biological role, involved in the biosynthesis of isopentenyl diphosphate (IPP) and dimethylallyl diphosphate (DMAPP), two major building blocks of isoprenoid compounds. Catalyzes the conversion of 4-diphosphocytidyl-2-C-methyl-D-erythritol 2-phosphate (CDP-ME2P) to 2-C-methyl-D-erythritol 2,4-cyclodiphosphate (ME-CPP) with a corresponding release of cytidine 5-monophosphate (CMP). The protein is 2-C-methyl-D-erythritol 2,4-cyclodiphosphate synthase of Bacillus subtilis (strain 168).